The primary structure comprises 562 residues: Arylsulfatase H (562 aa).

Ca(2+) is bound by residues D15, D16, and C55. The active-site Nucleophile is the C55. The residue at position 55 (C55) is a 3-oxoalanine (Cys). K115 is a substrate binding site. H117 is an active-site residue. The next 2 helical transmembrane spans lie at L167–A187 and W189–I209. H271 lines the substrate pocket. 2 residues coordinate Ca(2+): D323 and N324.

This sequence belongs to the sulfatase family. It depends on Ca(2+) as a cofactor. In terms of processing, the conversion to 3-oxoalanine (also known as C-formylglycine, FGly), of a serine or cysteine residue in prokaryotes and of a cysteine residue in eukaryotes, is critical for catalytic activity.

It is found in the membrane. This chain is Arylsulfatase H (ARSH), found in Canis lupus familiaris (Dog).